Here is a 101-residue protein sequence, read N- to C-terminus: Small ribosomal subunit protein uS14 (101 aa).

This sequence belongs to the universal ribosomal protein uS14 family. Part of the 30S ribosomal subunit. Contacts proteins S3 and S10.

In terms of biological role, binds 16S rRNA, required for the assembly of 30S particles and may also be responsible for determining the conformation of the 16S rRNA at the A site. This Francisella tularensis subsp. novicida (strain U112) protein is Small ribosomal subunit protein uS14.